The chain runs to 145 residues: Procyclic form-specific polypeptide B-alpha (145 aa).

Residues 1–27 form the signal peptide; it reads MAPRSLYLLAVLLFSANLFAGVGFAAA. The tract at residues 28-127 is disordered; sequence AEGPEDKGLT…PEPEPGAATL (100 aa). The segment covering 31–52 has biased composition (basic and acidic residues); it reads PEDKGLTKGGKGKGEKGTKVGA. 32 consecutive repeat copies span residues 59-60, 61-62, 63-64, 65-66, 67-68, 69-70, 71-72, 73-74, 75-76, 77-78, 79-80, 81-82, 83-84, 85-86, 87-88, 89-90, 91-92, 93-94, 95-96, 97-98, 99-100, 101-102, 103-104, 105-106, 107-108, 109-110, 111-112, 113-114, 115-116, 117-118, 119-120, and 121-122. A 32 X 2 AA tandem repeats of [DE]-P region spans residues 59–122; that stretch reads DPDPEPEPEP…EPEPEPEPEP (64 aa). A compositionally biased stretch (acidic residues) spans 60–120; that stretch reads PDPEPEPEPE…EPEPEPEPEP (61 aa). The GPI-anchor amidated glycine moiety is linked to residue G123. A propeptide spanning residues 124–145 is cleaved from the precursor; the sequence is AATLKSVALPFAIAAAALVAAF.

The protein resides in the cell membrane. In terms of biological role, major surface antigen of procyclic forms. The protein is Procyclic form-specific polypeptide B-alpha (PARPB) of Trypanosoma brucei brucei.